The chain runs to 250 residues: Probable aquaporin TIP-type RB7-18C (250 aa).

Transmembrane regions (helical) follow at residues Ala20–Tyr42 and Gly55–Ile77. Positions Asn83–Ala85 match the NPA 1 motif. A run of 3 helical transmembrane segments spans residues Thr97 to Leu119, Phe140 to Ala162, and Ile172 to Gly194. The NPA 2 signature appears at Asn197–Ala199. Residues Trp215–Ile237 form a helical membrane-spanning segment.

Belongs to the MIP/aquaporin (TC 1.A.8) family. TIP (TC 1.A.8.10) subfamily. Roots.

The protein localises to the vacuole membrane. Its function is as follows. Channel protein in tonoplast. These proteins may allow the diffusion of amino acids and/or peptides from the vacuolar compartment to the cytoplasm. This is Probable aquaporin TIP-type RB7-18C from Nicotiana tabacum (Common tobacco).